Here is a 177-residue protein sequence, read N- to C-terminus: MADFNQILTTGDVDGGIINVVNEIPAGSNHKIEWNRKLAAFQLDRVEPAIFAKPTNYGFIPQTLDEDGDELDVLLVTEQPLATGVFLEARVIGVMKFVDDGEVDDKIVCVPADDRNNGNAYKTLADLPQQLIKQIEFHFNHYKDLKKAGTTKVESWGDAEEAKKVIKESIERWNKQA.

Residues Lys31, Arg45, and Tyr57 each coordinate substrate. 3 residues coordinate Mg(2+): Asp67, Asp72, and Asp104. Tyr142 lines the substrate pocket.

It belongs to the PPase family. Homohexamer. The cofactor is Mg(2+).

The protein resides in the cytoplasm. It carries out the reaction diphosphate + H2O = 2 phosphate + H(+). Catalyzes the hydrolysis of inorganic pyrophosphate (PPi) forming two phosphate ions. In Neisseria meningitidis serogroup A / serotype 4A (strain DSM 15465 / Z2491), this protein is Inorganic pyrophosphatase.